The primary structure comprises 218 residues: Small ribosomal subunit protein uS3c (218 aa).

The KH type-2 domain occupies Val-47–Ala-118.

Belongs to the universal ribosomal protein uS3 family. As to quaternary structure, part of the 30S ribosomal subunit.

It is found in the plastid. It localises to the chloroplast. The polypeptide is Small ribosomal subunit protein uS3c (rps3) (Daucus carota (Wild carrot)).